Consider the following 167-residue polypeptide: NADH-quinone oxidoreductase subunit B (167 aa).

Residues Cys40, Cys41, Cys105, and Cys135 each coordinate [4Fe-4S] cluster.

This sequence belongs to the complex I 20 kDa subunit family. In terms of assembly, NDH-1 is composed of 14 different subunits. Subunits NuoB, C, D, E, F, and G constitute the peripheral sector of the complex. [4Fe-4S] cluster is required as a cofactor.

It is found in the cell inner membrane. The catalysed reaction is a quinone + NADH + 5 H(+)(in) = a quinol + NAD(+) + 4 H(+)(out). Its function is as follows. NDH-1 shuttles electrons from NADH, via FMN and iron-sulfur (Fe-S) centers, to quinones in the respiratory chain. The immediate electron acceptor for the enzyme in this species is believed to be ubiquinone. Couples the redox reaction to proton translocation (for every two electrons transferred, four hydrogen ions are translocated across the cytoplasmic membrane), and thus conserves the redox energy in a proton gradient. The protein is NADH-quinone oxidoreductase subunit B of Magnetococcus marinus (strain ATCC BAA-1437 / JCM 17883 / MC-1).